The sequence spans 433 residues: 3-phosphoshikimate 1-carboxyvinyltransferase (433 aa).

3-phosphoshikimate-binding residues include K22, S23, and R27. Position 22 (K22) interacts with phosphoenolpyruvate. Residues G95 and R123 each coordinate phosphoenolpyruvate. 4 residues coordinate 3-phosphoshikimate: S167, Q169, D315, and K342. Q169 is a phosphoenolpyruvate binding site. D315 functions as the Proton acceptor in the catalytic mechanism. Phosphoenolpyruvate-binding residues include R346 and R387.

This sequence belongs to the EPSP synthase family. In terms of assembly, monomer.

Its subcellular location is the cytoplasm. The enzyme catalyses 3-phosphoshikimate + phosphoenolpyruvate = 5-O-(1-carboxyvinyl)-3-phosphoshikimate + phosphate. Its pathway is metabolic intermediate biosynthesis; chorismate biosynthesis; chorismate from D-erythrose 4-phosphate and phosphoenolpyruvate: step 6/7. Its function is as follows. Catalyzes the transfer of the enolpyruvyl moiety of phosphoenolpyruvate (PEP) to the 5-hydroxyl of shikimate-3-phosphate (S3P) to produce enolpyruvyl shikimate-3-phosphate and inorganic phosphate. The protein is 3-phosphoshikimate 1-carboxyvinyltransferase of Legionella pneumophila subsp. pneumophila (strain Philadelphia 1 / ATCC 33152 / DSM 7513).